The sequence spans 1574 residues: DNA-directed RNA polymerase subunit beta' (1574 aa).

Zn(2+)-binding residues include Cys64, Cys66, Cys79, and Cys82. Positions 590, 592, and 594 each coordinate Mg(2+). The Zn(2+) site is built by Cys928, Cys1002, Cys1009, and Cys1012.

Belongs to the RNA polymerase beta' chain family. As to quaternary structure, the RNAP catalytic core consists of 2 alpha, 1 beta, 1 beta' and 1 omega subunit. When a sigma factor is associated with the core the holoenzyme is formed, which can initiate transcription. Mg(2+) is required as a cofactor. It depends on Zn(2+) as a cofactor.

The enzyme catalyses RNA(n) + a ribonucleoside 5'-triphosphate = RNA(n+1) + diphosphate. Functionally, DNA-dependent RNA polymerase catalyzes the transcription of DNA into RNA using the four ribonucleoside triphosphates as substrates. The chain is DNA-directed RNA polymerase subunit beta' from Aquifex aeolicus (strain VF5).